The following is a 120-amino-acid chain: CLAVATA3/ESR (CLE)-related protein 9 (120 aa).

The first 26 residues, 1 to 26 (MTMTHLNRLILISLLFVSLLLKSSTA), serve as a signal peptide directing secretion. A glycan (N-linked (GlcNAc...) asparagine) is linked at asparagine 35. The tract at residues 85 to 120 (RSSRKQPLLSPPPPEIDPRYGVDKRLVPSGPNPLHN) is disordered. Over residues 100–110 (IDPRYGVDKRL) the composition is skewed to basic and acidic residues. Hydroxyproline occurs at positions 112 and 115. A glycan (O-linked (Ara...) hydroxyproline) is linked at proline 115.

The protein belongs to the CLV3/ESR signal peptide family. The O-glycosylation (arabinosylation) of the hydroxyproline Pro-115 enhances binding affinity of the CLE9p peptide for its receptor. As to expression, mostly expressed in leaves, flowers, stems and apex, and, to a lower extent, in seedlings, roots, siliques and pollen.

Its subcellular location is the secreted. It is found in the extracellular space. Extracellular signal peptide that regulates cell fate. Represses root apical meristem maintenance. Regulates the transition of protophloem cells from proliferation to differentiation, thus impinging on postembryonic growth capacity of the root meristem; this signaling pathway requires CRN and CLV2. This chain is CLAVATA3/ESR (CLE)-related protein 9, found in Arabidopsis thaliana (Mouse-ear cress).